Reading from the N-terminus, the 408-residue chain is Voltage-gated potassium channel subunit beta-1 (408 aa).

Residues threonine 97, tryptophan 98, glutamine 104, and aspartate 126 each contribute to the NADP(+) site. The Proton donor/acceptor role is filled by tyrosine 131. Asparagine 199, serine 229, arginine 230, glutamine 255, tryptophan 284, serine 285, proline 286, leucine 287, alanine 288, cysteine 289, lysine 295, arginine 305, glycine 364, serine 366, glutamine 370, glutamate 373, and asparagine 374 together coordinate NADP(+).

This sequence belongs to the shaker potassium channel beta subunit family. As to quaternary structure, homotetramer. Interaction with tetrameric potassium channel alpha subunits gives rise to a heterooctamer. Identified in potassium channel complexes containing KCNA1, KCNA2, KCNA4, KCNA5, KCNA6, KCNAB1 and KCNAB2. Part of a complex containing KCNA1, KCNA4 and LGI1; interaction with LGI1 inhibits down-regulation of KCNA1 channel activity. Interacts with the dimer formed by GNB1 and GNG2; this enhances KCNA1 binding. Interacts with SQSTM1. In terms of tissue distribution, expression most abundant in aorta. Also high in left ventricle. Also detected in right ventricle, atrium, brain, skeletal muscle and kidney. Not detected in liver.

The protein resides in the cytoplasm. It localises to the membrane. The protein localises to the cell membrane. The enzyme catalyses a primary alcohol + NADP(+) = an aldehyde + NADPH + H(+). The catalysed reaction is a secondary alcohol + NADP(+) = a ketone + NADPH + H(+). Its function is as follows. Regulatory subunit of the voltage-gated potassium (Kv) Shaker channels composed of pore-forming and potassium-conducting alpha subunits and of regulatory beta subunits. The beta-1/KCNAB1 cytoplasmic subunit mediates closure of delayed rectifier potassium channels by physically obstructing the pore via its N-terminal domain and increases the speed of channel closure for other family members. Promotes the inactivation of Kv1.1/KCNA1, Kv1.2/KCNA2, Kv1.4/KCNA4, Kv1.5/KCNA5 and Kv1.6/KCNA6 alpha subunit-containing channels. Displays nicotinamide adenine dinucleotide phosphate (NADPH)-dependent aldoketoreductase activity by catalyzing the NADPH-dependent reduction of a variety of endogenous aldehydes and ketones. The binding of NADPH is required for efficient down-regulation of potassium channel activity. Oxidation of the bound NADPH restrains N-terminal domain from blocking the channel, thereby decreasing N-type inactivation of potassium channel activity. The polypeptide is Voltage-gated potassium channel subunit beta-1 (KCNAB1) (Mustela putorius (European polecat)).